A 307-amino-acid chain; its full sequence is Epimerase family protein ML0860 (307 aa).

Belongs to the NAD(P)-dependent epimerase/dehydratase family. SDR39U1 subfamily.

In Mycobacterium leprae (strain TN), this protein is Epimerase family protein ML0860.